Here is a 335-residue protein sequence, read N- to C-terminus: Methionine import ATP-binding protein MetN (335 aa).

An ABC transporter domain is found at 2–241 (IEFQRLHKSY…PKHVTTRRFV (240 aa)). 38–45 (GHSGAGKS) provides a ligand contact to ATP.

Belongs to the ABC transporter superfamily. Methionine importer (TC 3.A.1.24) family. The complex is composed of two ATP-binding proteins (MetN), two transmembrane proteins (MetI) and a solute-binding protein (MetQ).

It is found in the cell inner membrane. It catalyses the reaction L-methionine(out) + ATP + H2O = L-methionine(in) + ADP + phosphate + H(+). The enzyme catalyses D-methionine(out) + ATP + H2O = D-methionine(in) + ADP + phosphate + H(+). In terms of biological role, part of the ABC transporter complex MetNIQ involved in methionine import. Responsible for energy coupling to the transport system. This chain is Methionine import ATP-binding protein MetN, found in Xanthomonas oryzae pv. oryzae (strain KACC10331 / KXO85).